A 131-amino-acid chain; its full sequence is Small ribosomal subunit protein uS11 (131 aa).

The protein belongs to the universal ribosomal protein uS11 family. Part of the 30S ribosomal subunit. Interacts with proteins S7 and S18. Binds to IF-3.

Its function is as follows. Located on the platform of the 30S subunit, it bridges several disparate RNA helices of the 16S rRNA. Forms part of the Shine-Dalgarno cleft in the 70S ribosome. The chain is Small ribosomal subunit protein uS11 from Helicobacter pylori (strain Shi470).